The chain runs to 59 residues: Conotoxin Cl14.4 (59 aa).

Positions Met-1–Thr-19 are cleaved as a signal peptide. Residues Val-20 to Gly-36 constitute a propeptide that is removed on maturation. Residue Ile-58 is modified to Isoleucine amide.

Post-translationally, contains 2 disulfide bonds. In terms of tissue distribution, expressed by the venom duct.

It localises to the secreted. This is Conotoxin Cl14.4 from Californiconus californicus (California cone).